The chain runs to 224 residues: Endonuclease NucS (224 aa).

The protein belongs to the NucS endonuclease family.

Its subcellular location is the cytoplasm. Functionally, cleaves both 3' and 5' ssDNA extremities of branched DNA structures. The sequence is that of Endonuclease NucS from Mycolicibacterium smegmatis (strain ATCC 700084 / mc(2)155) (Mycobacterium smegmatis).